The following is a 487-amino-acid chain: DNA polymerase delta small subunit (487 aa).

Met-1 is subject to N-acetylmethionine. Ser-20 carries the post-translational modification Phosphoserine.

Belongs to the DNA polymerase delta/II small subunit family. In terms of assembly, DNA polymerase delta is a heterotrimer of POL3, POL32 and HYS2.

The protein localises to the nucleus. It catalyses the reaction DNA(n) + a 2'-deoxyribonucleoside 5'-triphosphate = DNA(n+1) + diphosphate. Functionally, DNA polymerase delta (DNA polymerase III) participates in chromosomal DNA replication. It is required during synthesis of the leading and lagging DNA strands at the replication fork and binds at/or near replication origins and moves along DNA with the replication fork. It has 3'-5' proofreading exonuclease activity that correct errors arising during DNA replication. It is also involved in DNA synthesis during DNA repair. The polypeptide is DNA polymerase delta small subunit (POL31) (Saccharomyces cerevisiae (strain ATCC 204508 / S288c) (Baker's yeast)).